We begin with the raw amino-acid sequence, 639 residues long: Nitrous-oxide reductase (639 aa).

The tat-type signal signal peptide spans 1–54; sequence MSDKKDQVPGAVEAPRGVSRRSFLGTGAVTGAVLAGATALGAGTFTRESWAAAA. Cu cation contacts are provided by histidine 130, histidine 131, and histidine 179. Ca(2+) contacts are provided by tyrosine 257, glutamate 260, methionine 268, aspartate 274, and asparagine 325. The Cu cation site is built by histidine 327, histidine 383, and histidine 434. Positions 455 and 470 each coordinate Ca(2+). Residues histidine 495, histidine 584, cysteine 619, tryptophan 621, cysteine 623, histidine 627, and methionine 630 each coordinate Cu cation. Positions 543–639 are COX2-like; the sequence is NKVRVYMTSM…MVGRMLVEKA (97 aa).

This sequence belongs to the NosZ family. It in the C-terminal section; belongs to the cytochrome c oxidase subunit 2 family. As to quaternary structure, homodimer. It depends on Ca(2+) as a cofactor. The cofactor is Cu cation. Predicted to be exported by the Tat system. The position of the signal peptide cleavage has not been experimentally proven.

The protein resides in the periplasm. It carries out the reaction N2 + 2 Fe(III)-[cytochrome c] + H2O = nitrous oxide + 2 Fe(II)-[cytochrome c] + 2 H(+). The protein operates within nitrogen metabolism; nitrate reduction (denitrification); dinitrogen from nitrate: step 4/4. Nitrous-oxide reductase is part of a bacterial respiratory system which is activated under anaerobic conditions in the presence of nitrate or nitrous oxide. The sequence is that of Nitrous-oxide reductase (nosZ) from Pseudomonas fluorescens.